The following is a 316-amino-acid chain: MQSRAVILKYRSGSGHKRSLPRFYIDCDLDTFDFEKDCSLIENEFPIYINNYKVVYKSKPTLSHFLIEKEFPAVLGPGMISAVRTRLYEPTMRELYQESIHQLKRSNKKYLLSALRWPTGIPTLEFIDYYFEELLFLSEFDPGSIQRYLKLLVKASGLYNSTNEEQIVEIHRRVLIEGKKHGLTAFDLPGNDILGDICVVQAARVTRLVAKTFSKMTRDTHLMIYFSISPVELVLSKLDKKGDKRAKAKGLMSMSAARSYDYFMRTDLGFRETALSTFWAKDWPTPQETILSDKRCLKEDMRVTKWLPSPPHYPPL.

The protein belongs to the phlebovirus NS-S protein family. Interacts with host RIGI; this interaction targets RIGI to proteasomal degradation. Interacts with host EIF2AK2/PKR; this interaction leads to the proteasomal degradation of host EIF2AK2/PKR.

Promotes the proteasomal degradation of host EIF2AK2/PKR but is unable to suppress host general transcription. Prevents the establishment of the host antiviral state by interfering with beta interferon (IFN-beta) production. Interacts with host RIGI and targets it for proteasomal degradation, thereby inhibiting RIGI-mediated signaling pathway. In Toscana virus (Tos), this protein is Non-structural protein NS-S (NSS).